The primary structure comprises 384 residues: 8-amino-7-oxononanoate synthase (384 aa).

Substrate is bound at residue Arg-23. Position 110 to 111 (110 to 111 (GF)) interacts with pyridoxal 5'-phosphate. His-135 provides a ligand contact to substrate. Ser-179, His-206, and Thr-232 together coordinate pyridoxal 5'-phosphate. Lys-235 bears the N6-(pyridoxal phosphate)lysine mark. Thr-348 provides a ligand contact to substrate.

Belongs to the class-II pyridoxal-phosphate-dependent aminotransferase family. BioF subfamily. Homodimer. Pyridoxal 5'-phosphate serves as cofactor.

The catalysed reaction is 6-carboxyhexanoyl-[ACP] + L-alanine + H(+) = (8S)-8-amino-7-oxononanoate + holo-[ACP] + CO2. Its pathway is cofactor biosynthesis; biotin biosynthesis. Catalyzes the decarboxylative condensation of pimeloyl-[acyl-carrier protein] and L-alanine to produce 8-amino-7-oxononanoate (AON), [acyl-carrier protein], and carbon dioxide. In Vibrio cholerae serotype O1 (strain ATCC 39315 / El Tor Inaba N16961), this protein is 8-amino-7-oxononanoate synthase.